A 160-amino-acid polypeptide reads, in one-letter code: Aspartate carbamoyltransferase regulatory chain (160 aa).

Zn(2+)-binding residues include C110, C115, C140, and C143.

The protein belongs to the PyrI family. Contains catalytic and regulatory chains. Requires Zn(2+) as cofactor.

Its function is as follows. Involved in allosteric regulation of aspartate carbamoyltransferase. This chain is Aspartate carbamoyltransferase regulatory chain, found in Hyperthermus butylicus (strain DSM 5456 / JCM 9403 / PLM1-5).